Consider the following 547-residue polypeptide: MSAKEVRFGEDARNKMLKGVNILADAVKVTLGPKGRNVILDKSFGTPTVTKDGVSVAKEIELADKFENMGAQLVKEVASQTNDAAGDGTTTATVLAQAIVVEGLKAVAAGMNPMDLKRGIDKAVAEAVKTLHAISKPCSDSKAIAQVGTISANSDETVGAKIAEAMEKVGKEGVITVEEGQGLEDSLEVVEGMQFDRGYLSPYFINNQQSQQVELENPYILLHDKKIANIRDMLPLLEGVAKSGQPLLIVAEDVEGEALATLVINSMRGIVKVAAVKAPGFGDRRKAMLEDIAILTGGTVISEEVGLTLESVTLDQLGTAKRVTVGKDNTTIIDGSGEKSAIEARVALIRHQIEESSSDYDKEKLQERVAKLAGGVAVIKVGAATEVEMKEKKDRVEDALHATRAAVEEGIVPGGGVALIRAINSIVDLKGDNYDQQVGIDIARRAMEYPLRTIVSNAGSEAAVVLERVKSGKGNDGYDAATGQYVDMVAAGIIDPTKVTRSALQNAASVAGLMITTEAMVSEIPQKEEGHHHDMGGMGGMGGMGMM.

Residues 30–33 (TLGP), Lys-51, 87–91 (DGTTT), Gly-415, 479–481 (DAA), and Asp-495 contribute to the ATP site.

Belongs to the chaperonin (HSP60) family. As to quaternary structure, forms a cylinder of 14 subunits composed of two heptameric rings stacked back-to-back. Interacts with the co-chaperonin GroES.

It is found in the cytoplasm. It catalyses the reaction ATP + H2O + a folded polypeptide = ADP + phosphate + an unfolded polypeptide.. Its function is as follows. Together with its co-chaperonin GroES, plays an essential role in assisting protein folding. The GroEL-GroES system forms a nano-cage that allows encapsulation of the non-native substrate proteins and provides a physical environment optimized to promote and accelerate protein folding. This is Chaperonin GroEL from Dichelobacter nodosus (strain VCS1703A).